A 277-amino-acid polypeptide reads, in one-letter code: MQGGGGGDSSGGGGGEAPRPSRYESQKRRDWHTFGQYLRNHRPPLELSRCSGAHVLEFLRYLDQFGKTKVHAAGCPFFGHPSPPAPCPCPLRQAWGSLDALVGRLRAAFEEHGGRPEANPFGARAVRLYLREVRDSQAKARGIAYEKKRRKRPPTSSSSSQAAAAAAAATSPASPAASPTPPPPPPTERSADVRPMPPEGHFFIPHPHFMHGHFLVPGGDADHHHQVSNAGNGGNTNTNTNTNTGGGGGNGDEMAVAMAAVAEAHAAGCMLPLSVFN.

The span at 1 to 16 (MQGGGGGDSSGGGGGE) shows a compositional bias: gly residues. Disordered regions lie at residues 1–28 (MQGG…SQKR), 141–203 (RGIA…GHFF), and 225–245 (HQVS…TNTG). A compositionally biased stretch (basic and acidic residues) spans 19-28 (RPSRYESQKR). The ALOG domain occupies 22–149 (RYESQKRRDW…ARGIAYEKKR (128 aa)). Positions 147–151 (KKRRK) match the Nuclear localization signal motif. A compositionally biased stretch (low complexity) spans 154–177 (PTSSSSSQAAAAAAAATSPASPAA). Residues 178–187 (SPTPPPPPPT) are compositionally biased toward pro residues.

It belongs to the plant homeotic and developmental regulators ALOG protein family.

It is found in the nucleus. Functionally, probable transcription regulator that acts as a developmental regulator by promoting cell growth in response to light. The sequence is that of Protein G1-like2 (G1L2) from Oryza sativa subsp. japonica (Rice).